Here is a 283-residue protein sequence, read N- to C-terminus: Protein/nucleic acid deglycase HchA (283 aa).

Positions 86, 91, and 123 each coordinate Zn(2+). Cysteine 185 serves as the catalytic Nucleophile.

It belongs to the peptidase C56 family. HchA subfamily. In terms of assembly, homodimer.

It localises to the cytoplasm. It carries out the reaction N(omega)-(1-hydroxy-2-oxopropyl)-L-arginyl-[protein] + H2O = lactate + L-arginyl-[protein] + H(+). It catalyses the reaction N(6)-(1-hydroxy-2-oxopropyl)-L-lysyl-[protein] + H2O = lactate + L-lysyl-[protein] + H(+). The enzyme catalyses S-(1-hydroxy-2-oxopropyl)-L-cysteinyl-[protein] + H2O = lactate + L-cysteinyl-[protein] + H(+). The catalysed reaction is N(omega)-(1-hydroxy-2-oxoethyl)-L-arginyl-[protein] + H2O = L-arginyl-[protein] + glycolate + H(+). It carries out the reaction N(6)-(1-hydroxy-2-oxoethyl)-L-lysyl-[protein] + H2O = glycolate + L-lysyl-[protein] + H(+). It catalyses the reaction S-(1-hydroxy-2-oxoethyl)-L-cysteinyl-[protein] + H2O = glycolate + L-cysteinyl-[protein] + H(+). The enzyme catalyses N(2)-(1-hydroxy-2-oxopropyl)-dGTP + H2O = lactate + dGTP + H(+). The catalysed reaction is N(2)-(1-hydroxy-2-oxopropyl)-GTP + H2O = lactate + GTP + H(+). It carries out the reaction N(2)-(1-hydroxy-2-oxopropyl)-GDP + H2O = lactate + GDP + H(+). It catalyses the reaction N(2)-(1-hydroxy-2-oxopropyl)-GMP + H2O = lactate + GMP + H(+). The enzyme catalyses N(2)-(1-hydroxy-2-oxoethyl)-dGTP + H2O = dGTP + glycolate + H(+). The catalysed reaction is N(2)-(1-hydroxy-2-oxoethyl)-GTP + H2O = glycolate + GTP + H(+). It carries out the reaction N(2)-(1-hydroxy-2-oxoethyl)-GDP + H2O = glycolate + GDP + H(+). It catalyses the reaction N(2)-(1-hydroxy-2-oxoethyl)-GMP + H2O = glycolate + GMP + H(+). The enzyme catalyses an N(2)-(1-hydroxy-2-oxopropyl)-guanosine in RNA + H2O = a guanosine in RNA + lactate + H(+). The catalysed reaction is an N(2)-(1-hydroxy-2-oxopropyl)-2'-deoxyguanosine in DNA + H2O = a 2'-deoxyguanosine in DNA + lactate + H(+). It carries out the reaction an N(2)-(1-hydroxy-2-oxoethyl)-guanosine in RNA + H2O = a guanosine in RNA + glycolate + H(+). It catalyses the reaction an N(2)-(1-hydroxy-2-oxoethyl)-2'-deoxyguanosine in DNA + H2O = a 2'-deoxyguanosine in DNA + glycolate + H(+). In terms of biological role, protein and nucleotide deglycase that catalyzes the deglycation of the Maillard adducts formed between amino groups of proteins or nucleotides and reactive carbonyl groups of glyoxals. Thus, functions as a protein deglycase that repairs methylglyoxal- and glyoxal-glycated proteins, and releases repaired proteins and lactate or glycolate, respectively. Deglycates cysteine, arginine and lysine residues in proteins, and thus reactivates these proteins by reversing glycation by glyoxals. Acts on early glycation intermediates (hemithioacetals and aminocarbinols), preventing the formation of Schiff bases and advanced glycation endproducts (AGE). Also functions as a nucleotide deglycase able to repair glycated guanine in the free nucleotide pool (GTP, GDP, GMP, dGTP) and in DNA and RNA. Is thus involved in a major nucleotide repair system named guanine glycation repair (GG repair), dedicated to reversing methylglyoxal and glyoxal damage via nucleotide sanitization and direct nucleic acid repair. Plays an important role in protecting cells from carbonyl stress. This Shigella flexneri protein is Protein/nucleic acid deglycase HchA.